Reading from the N-terminus, the 340-residue chain is NADH-quinone oxidoreductase subunit H (340 aa).

9 consecutive transmembrane segments (helical) span residues 9-29, 81-101, 113-133, 158-178, 184-204, 221-240, 245-264, 273-293, and 316-336; these read IWII…VAFI, LIAP…IPFA, LLFL…AGWA, GFAL…GIVL, LWHW…ITAV, IVAG…FFLA, MVLV…LSPF, LFAW…FIFT, and VLIP…EFHW.

It belongs to the complex I subunit 1 family. In terms of assembly, NDH-1 is composed of 14 different subunits. Subunits NuoA, H, J, K, L, M, N constitute the membrane sector of the complex.

The protein resides in the cell inner membrane. The enzyme catalyses a quinone + NADH + 5 H(+)(in) = a quinol + NAD(+) + 4 H(+)(out). Its function is as follows. NDH-1 shuttles electrons from NADH, via FMN and iron-sulfur (Fe-S) centers, to quinones in the respiratory chain. The immediate electron acceptor for the enzyme in this species is believed to be ubiquinone. Couples the redox reaction to proton translocation (for every two electrons transferred, four hydrogen ions are translocated across the cytoplasmic membrane), and thus conserves the redox energy in a proton gradient. This subunit may bind ubiquinone. The protein is NADH-quinone oxidoreductase subunit H of Coxiella burnetii (strain CbuK_Q154) (Coxiella burnetii (strain Q154)).